The sequence spans 446 residues: Phosphoglucosamine mutase (446 aa).

Residue S101 is the Phosphoserine intermediate of the active site. 4 residues coordinate Mg(2+): S101, D240, D242, and D244. S101 is modified (phosphoserine).

The protein belongs to the phosphohexose mutase family. Mg(2+) serves as cofactor. Post-translationally, activated by phosphorylation.

The enzyme catalyses alpha-D-glucosamine 1-phosphate = D-glucosamine 6-phosphate. Functionally, catalyzes the conversion of glucosamine-6-phosphate to glucosamine-1-phosphate. This Pseudomonas entomophila (strain L48) protein is Phosphoglucosamine mutase.